The primary structure comprises 592 residues: Putative amidase ARB_02965 (592 aa).

An N-terminal signal peptide occupies residues 1–21 (MKGPITFLLQLGAVYTSIASA). Asparagine 120 carries N-linked (GlcNAc...) asparagine glycosylation. Lysine 161 functions as the Charge relay system in the catalytic mechanism. A glycan (N-linked (GlcNAc...) asparagine) is linked at asparagine 217. Catalysis depends on serine 242, which acts as the Charge relay system. Residues serine 242 and 263–266 (TSGS) contribute to the substrate site. Serine 266 (acyl-ester intermediate) is an active-site residue. N-linked (GlcNAc...) asparagine glycosylation is found at asparagine 326, asparagine 430, and asparagine 528.

The protein belongs to the amidase family.

It is found in the secreted. This chain is Putative amidase ARB_02965, found in Arthroderma benhamiae (strain ATCC MYA-4681 / CBS 112371) (Trichophyton mentagrophytes).